We begin with the raw amino-acid sequence, 1357 residues long: Mediator of RNA polymerase II transcription subunit 13 (1357 aa).

2 disordered regions span residues 356-391 (SCNY…GNGF) and 420-487 (DLWN…HRKE). The span at 435–451 (INPTSQQGDSARITSGS) shows a compositional bias: polar residues.

This sequence belongs to the Mediator complex subunit 13 family. In terms of assembly, component of the SRB8-11 complex, which itself associates with the Mediator complex.

It is found in the nucleus. Functionally, component of the SRB8-11 complex. The SRB8-11 complex is a regulatory module of the Mediator complex which is itself involved in regulation of basal and activated RNA polymerase II-dependent transcription. The SRB8-11 complex may be involved in the transcriptional repression of a subset of genes regulated by Mediator. It may inhibit the association of the Mediator complex with RNA polymerase II to form the holoenzyme complex. This chain is Mediator of RNA polymerase II transcription subunit 13 (SSN2), found in Eremothecium gossypii (strain ATCC 10895 / CBS 109.51 / FGSC 9923 / NRRL Y-1056) (Yeast).